Reading from the N-terminus, the 348-residue chain is Ninja-family protein AFP2 (348 aa).

Residues 186–272 (DSDGGGATGG…VDRKGKGMAT (87 aa)) form a disordered region. The span at 187–197 (SDGGGATGGGS) shows a compositional bias: gly residues. 2 stretches are compositionally biased toward polar residues: residues 207–216 (KNQQGSSNSC) and 228–244 (CSSN…SVTR). Over residues 247 to 267 (KVNENENEKRVRSEDSVDRKG) the composition is skewed to basic and acidic residues.

Belongs to the Ninja family. As to quaternary structure, forms a homodimer and heterodimer with AFP1 and AFP3. Interacts with ABI5/DPBF1, DPBF2, AREB3/DPBF3, EEL/DPBF4, ABF1, ABF3/DPBF5 and ABF4/AREB2.

Its subcellular location is the nucleus. Acts as a negative regulator of abscisic acid (ABA) response during germination through the ubiquitin-mediated proteolysis of ABI5/DPBF1. The protein is Ninja-family protein AFP2 (AFP2) of Arabidopsis thaliana (Mouse-ear cress).